A 179-amino-acid chain; its full sequence is NADH-quinone oxidoreductase subunit I (179 aa).

4Fe-4S ferredoxin-type domains follow at residues 45–74 (RHPDTGLEKCIGCSLCAAVCPAYAIYVEAA) and 90–119 (KVYEINMLRCIFCGLCEEACPTGAVVLGNE). Residues C54, C57, C60, C64, C99, C102, C105, and C109 each coordinate [4Fe-4S] cluster. Positions 146-179 (PQRREAQRTGKPVRLGFKVPKGPRPELEGVEYPR) are disordered. A compositionally biased stretch (basic and acidic residues) spans 168–179 (PRPELEGVEYPR).

It belongs to the complex I 23 kDa subunit family. In terms of assembly, NDH-1 is composed of 15 different subunits. Subunits NuoA, H, J, K, L, M, N constitute the membrane sector of the complex. It depends on [4Fe-4S] cluster as a cofactor.

Its subcellular location is the cell membrane. It catalyses the reaction a quinone + NADH + 5 H(+)(in) = a quinol + NAD(+) + 4 H(+)(out). Its function is as follows. NDH-1 shuttles electrons from NADH, via FMN and iron-sulfur (Fe-S) centers, to quinones in the respiratory chain. The immediate electron acceptor for the enzyme in this species is believed to be ubiquinone. Couples the redox reaction to proton translocation (for every two electrons transferred, four hydrogen ions are translocated across the cytoplasmic membrane), and thus conserves the redox energy in a proton gradient. The sequence is that of NADH-quinone oxidoreductase subunit I from Deinococcus geothermalis (strain DSM 11300 / CIP 105573 / AG-3a).